The chain runs to 299 residues: Peroxisomal biogenesis factor 19 (299 aa).

The tract at residues 1–63 (MAAAEEGCSV…SPGDTAKDAL (63 aa)) is disordered. A2 carries the post-translational modification N-acetylalanine. The tract at residues 2–56 (AAAEEGCSVGAEADRELEELLESALDDFDKAKPSPAPPSTTTAPDASGPQKRSPG) is docking to the peroxisome membrane and binding to PEX3. The necessary for PEX19 function on peroxisome biogenesis stretch occupies residues 2-91 (AAAEEGCSVG…QATAEFEKAM (90 aa)). Positions 16-27 (RELEELLESALD) are enriched in acidic residues. A phosphoserine mark is found at S35, S54, and S66. A Phosphothreonine modification is found at T236. C296 is subject to Cysteine methyl ester. C296 carries S-farnesyl cysteine lipidation. The propeptide at 297–299 (LIM) is removed in mature form.

This sequence belongs to the peroxin-19 family. As to quaternary structure, interacts with a broad range of peroxisomal membrane proteins, including PEX3, PEX10, PEX11A, PEX11B, PEX12, PEX13, PEX14 and PEX16, PXMP2/PMP22, PXMP4/PMP24, SLC25A17/PMP34, ABCD1/ALDP, ABCD2/ALDRP, and ABCD3/PMP70. Also interacts with the tumor suppressor CDKN2A/p19ARF. In terms of assembly, (Microbial infection) Interacts with human cytomegalovirus protein UL37 isoform vMIA; this interaction inhibits the peroxisomal-dependent antiviral signaling. In terms of tissue distribution, ubiquitously expressed. Isoform 1 is strongly predominant in all tissues except in utero where isoform 2 is the main form.

The protein resides in the cytoplasm. Its subcellular location is the peroxisome membrane. Its function is as follows. Necessary for early peroxisomal biogenesis. Acts both as a cytosolic chaperone and as an import receptor for peroxisomal membrane proteins (PMPs). Binds and stabilizes newly synthesized PMPs in the cytoplasm by interacting with their hydrophobic membrane-spanning domains, and targets them to the peroxisome membrane by binding to the integral membrane protein PEX3. Excludes CDKN2A from the nucleus and prevents its interaction with MDM2, which results in active degradation of TP53. This Homo sapiens (Human) protein is Peroxisomal biogenesis factor 19.